We begin with the raw amino-acid sequence, 319 residues long: Coproporphyrin III ferrochelatase (319 aa).

Positions 193 and 274 each coordinate Fe(2+).

It belongs to the ferrochelatase family.

The protein resides in the cytoplasm. It carries out the reaction Fe-coproporphyrin III + 2 H(+) = coproporphyrin III + Fe(2+). It participates in porphyrin-containing compound metabolism; protoheme biosynthesis. Its function is as follows. Involved in coproporphyrin-dependent heme b biosynthesis. Catalyzes the insertion of ferrous iron into coproporphyrin III to form Fe-coproporphyrin III. The sequence is that of Coproporphyrin III ferrochelatase from Streptococcus mutans serotype c (strain ATCC 700610 / UA159).